We begin with the raw amino-acid sequence, 524 residues long: Lysine--tRNA ligase (524 aa).

Glu-433 and Glu-440 together coordinate Mg(2+).

Belongs to the class-II aminoacyl-tRNA synthetase family. In terms of assembly, homodimer. Mg(2+) serves as cofactor.

The protein resides in the cytoplasm. It catalyses the reaction tRNA(Lys) + L-lysine + ATP = L-lysyl-tRNA(Lys) + AMP + diphosphate. The chain is Lysine--tRNA ligase from Colwellia psychrerythraea (strain 34H / ATCC BAA-681) (Vibrio psychroerythus).